Consider the following 561-residue polypeptide: Putative transport protein YbjL (561 aa).

5 helical membrane-spanning segments follow: residues 8–28 (LLNG…LCLG), 32–52 (LGSI…LLGQ), 66–86 (FMLF…SIFF), 94–114 (MLAL…GKLF), and 158–178 (NLSL…IVGA). RCK C-terminal domains follow at residues 200–288 (RGLD…SFRN) and 292–373 (VFDR…RIGF). 6 helical membrane-spanning segments follow: residues 383–403 (LLAF…TFQF), 406–426 (FSFG…LGFM), 451–471 (VFMA…LGAI), 475–495 (MLIA…LFGA), 503–523 (ALLF…EIIS), and 540–560 (AIAN…CPGL).

This sequence belongs to the AAE transporter (TC 2.A.81) family. YbjL subfamily.

It localises to the cell membrane. In Shigella dysenteriae serotype 1 (strain Sd197), this protein is Putative transport protein YbjL.